The following is a 165-amino-acid chain: Putative ankyrin repeat domain-containing protein 20A5 (165 aa).

ANK repeat units lie at residues 66–95 (QHRTALHLACASGHVKVVTLLVNRKCQIDI), 99–128 (ENRTPLIQAVHCQEEACAVILLEHGANPNL), and 132–161 (YGNTALHYAVYSESTSLAEKLLFHGENIEA).

The sequence is that of Putative ankyrin repeat domain-containing protein 20A5 (ANKRD20A5P) from Homo sapiens (Human).